A 126-amino-acid chain; its full sequence is Holo-[acyl-carrier-protein] synthase (126 aa).

2 residues coordinate Mg(2+): Asp9 and Glu58.

It belongs to the P-Pant transferase superfamily. AcpS family. Requires Mg(2+) as cofactor.

The protein localises to the cytoplasm. It catalyses the reaction apo-[ACP] + CoA = holo-[ACP] + adenosine 3',5'-bisphosphate + H(+). Its function is as follows. Transfers the 4'-phosphopantetheine moiety from coenzyme A to a Ser of acyl-carrier-protein. The polypeptide is Holo-[acyl-carrier-protein] synthase (Citrobacter koseri (strain ATCC BAA-895 / CDC 4225-83 / SGSC4696)).